The sequence spans 456 residues: Bifunctional protein GlmU (456 aa).

Residues 1 to 229 are pyrophosphorylase; sequence MLNNAMSVVI…LSEVEGVNNR (229 aa). UDP-N-acetyl-alpha-D-glucosamine contacts are provided by residues 11 to 14, Lys25, Gln76, 81 to 82, 103 to 105, Gly140, Glu154, Asn169, and Asn227; these read LAAG, GT, and YGD. Residue Asp105 participates in Mg(2+) binding. Asn227 is a Mg(2+) binding site. Positions 230 to 250 are linker; sequence LQLSRLERVYQSEQAEKLLLA. Residues 251 to 456 are N-acetyltransferase; it reads GVMLRDPARF…EGWRRPVKKK (206 aa). Residues Arg333 and Lys351 each coordinate UDP-N-acetyl-alpha-D-glucosamine. His363 acts as the Proton acceptor in catalysis. 2 residues coordinate UDP-N-acetyl-alpha-D-glucosamine: Tyr366 and Asn377. Acetyl-CoA is bound by residues Ala380, 386-387, Ser405, Ala423, and Arg440; that span reads NY.

It in the N-terminal section; belongs to the N-acetylglucosamine-1-phosphate uridyltransferase family. In the C-terminal section; belongs to the transferase hexapeptide repeat family. Homotrimer. Requires Mg(2+) as cofactor.

It localises to the cytoplasm. It catalyses the reaction alpha-D-glucosamine 1-phosphate + acetyl-CoA = N-acetyl-alpha-D-glucosamine 1-phosphate + CoA + H(+). The catalysed reaction is N-acetyl-alpha-D-glucosamine 1-phosphate + UTP + H(+) = UDP-N-acetyl-alpha-D-glucosamine + diphosphate. It functions in the pathway nucleotide-sugar biosynthesis; UDP-N-acetyl-alpha-D-glucosamine biosynthesis; N-acetyl-alpha-D-glucosamine 1-phosphate from alpha-D-glucosamine 6-phosphate (route II): step 2/2. It participates in nucleotide-sugar biosynthesis; UDP-N-acetyl-alpha-D-glucosamine biosynthesis; UDP-N-acetyl-alpha-D-glucosamine from N-acetyl-alpha-D-glucosamine 1-phosphate: step 1/1. Its pathway is bacterial outer membrane biogenesis; LPS lipid A biosynthesis. In terms of biological role, catalyzes the last two sequential reactions in the de novo biosynthetic pathway for UDP-N-acetylglucosamine (UDP-GlcNAc). The C-terminal domain catalyzes the transfer of acetyl group from acetyl coenzyme A to glucosamine-1-phosphate (GlcN-1-P) to produce N-acetylglucosamine-1-phosphate (GlcNAc-1-P), which is converted into UDP-GlcNAc by the transfer of uridine 5-monophosphate (from uridine 5-triphosphate), a reaction catalyzed by the N-terminal domain. In Escherichia coli (strain 55989 / EAEC), this protein is Bifunctional protein GlmU.